Consider the following 214-residue polypeptide: MWCFIVFLTIFLPTLEGQYGPAVTGPSLPEELCTKDPQVSRGRFYRLKVRPSFYRRAHPLQVELYQTIHAYGPIIADAYVHVPETAKNSSTAALGIKTLGYWLPKNPDNYKISRALSCYNSVWGNDAIVANSDRELKFNLTGIWYPPTSEFDLIKRPFVKIVAYVTPDPDVRRRRWYRAESQPIRNLDYIAFQHHMRRYKAQMKAFRTQLEMFN.

The signal sequence occupies residues 1 to 17 (MWCFIVFLTIFLPTLEG). N-linked (GlcNAc...) asparagine glycosylation is found at asparagine 88 and asparagine 139.

Component of the acid-insoluble organic matrix of calcified layers of the shell (at protein level).

The protein localises to the secreted. This is an uncharacterized protein from Lottia gigantea (Giant owl limpet).